Consider the following 236-residue polypeptide: 2-C-methyl-D-erythritol 4-phosphate cytidylyltransferase (236 aa).

Belongs to the IspD/TarI cytidylyltransferase family. IspD subfamily. As to quaternary structure, homodimer.

It catalyses the reaction 2-C-methyl-D-erythritol 4-phosphate + CTP + H(+) = 4-CDP-2-C-methyl-D-erythritol + diphosphate. The protein operates within isoprenoid biosynthesis; isopentenyl diphosphate biosynthesis via DXP pathway; isopentenyl diphosphate from 1-deoxy-D-xylulose 5-phosphate: step 2/6. In terms of biological role, catalyzes the formation of 4-diphosphocytidyl-2-C-methyl-D-erythritol from CTP and 2-C-methyl-D-erythritol 4-phosphate (MEP). This Salmonella agona (strain SL483) protein is 2-C-methyl-D-erythritol 4-phosphate cytidylyltransferase.